The following is a 546-amino-acid chain: Glucose-6-phosphate isomerase (546 aa).

The active-site Proton donor is the Glu356. Residues His387 and Lys507 contribute to the active site.

It belongs to the GPI family.

It is found in the cytoplasm. It catalyses the reaction alpha-D-glucose 6-phosphate = beta-D-fructose 6-phosphate. It participates in carbohydrate biosynthesis; gluconeogenesis. It functions in the pathway carbohydrate degradation; glycolysis; D-glyceraldehyde 3-phosphate and glycerone phosphate from D-glucose: step 2/4. Functionally, catalyzes the reversible isomerization of glucose-6-phosphate to fructose-6-phosphate. The protein is Glucose-6-phosphate isomerase of Syntrophus aciditrophicus (strain SB).